The primary structure comprises 152 residues: MVKAVAVLNSSEGVSGTILFTQDGAAPTTVNGNISGLKPGLHGFHVHALGDTTNGCMSTGPHYNPAGKEHGAPEDEVRHAGDLGNITVGEDGTASFTITDKQIPLTGPQSIIGRAVVVHADPDDLGKGGHELSKSTGNAGGRIACGIIGLQG.

H45, H47, and H62 together coordinate Cu cation. An intrachain disulfide couples C56 to C145. The Zn(2+) site is built by H62, H70, H79, and D82. Position 119 (H119) interacts with Cu cation.

Belongs to the Cu-Zn superoxide dismutase family. In terms of assembly, homodimer. The cofactor is Cu cation. It depends on Zn(2+) as a cofactor.

It localises to the cytoplasm. It carries out the reaction 2 superoxide + 2 H(+) = H2O2 + O2. Functionally, destroys radicals which are normally produced within the cells and which are toxic to biological systems. This is Superoxide dismutase [Cu-Zn] 2 (SODCC.5) from Solanum lycopersicum (Tomato).